The primary structure comprises 391 residues: MSGPVPSRARVYTDVNTHRPREYWDYESHVVEWGNQDDYQLVRKLGRGKYSEVFEAINITNNEKVVVKILKPVKKKKIKREIKILENLRGGPNIITLADIVKDPVSRTPALVFEHVNNTDFKQLYQTLTDYDIRFYMYEILKALDYCHSMGIMHRDVKPHNVMIDHEHRKLRLIDWGLAEFYHPGQEYNVRVASRYFKGPELLVDYQMYDYSLDMWSLGCMLASMIFRKEPFFHGHDNYDQLVRIAKVLGTEDLYDYIDKYNIELDPRFNDILGRHSRKRWERFVHSENQHLVSPEALDFLDKLLRYDHQSRLTAREAMEHPYFYTVVKDQARMSSTSMAGGSTPVSSANMMSGISSVPTPSPLGPLAGSPVIAAANSLGIPVPAAAGAQQ.

The segment at 36–41 (QDDYQL) is interaction with beta subunit. The region spanning 39-324 (YQLVRKLGRG…AREAMEHPYF (286 aa)) is the Protein kinase domain. ATP contacts are provided by residues 45-53 (LGRGKYSEV) and K68. The active-site Proton acceptor is D156. A phosphothreonine; by CDK1 mark is found at T344 and T360. Phosphoserine; by CDK1 occurs at positions 362 and 370.

It belongs to the protein kinase superfamily. Ser/Thr protein kinase family. CK2 subfamily. Heterotetramer composed of two catalytic subunits (alpha chain and/or alpha' chain) and two regulatory subunits (beta chains). The tetramer can exist as a combination of 2 alpha/2 beta, 2 alpha'/2 beta or 1 alpha/1 alpha'/2 beta subunits. Also part of a CK2-SPT16-SSRP1 complex composed of SSRP1, SUPT16H, CSNK2A1, CSNK2A2 and CSNK2B, which forms following UV irradiation. Interacts with RNPS1. Interacts with SNAI1. Interacts with PML. Interacts with CCAR2. Interacts with HIRIP3. Post-translationally, phosphorylated at Thr-344, Thr-360, Ser-362 and Ser-370 by CDK1 in prophase and metaphase and dephosphorylated during anaphase. Phosphorylation does not directly affect casein kinase 2 activity, but may contribute to its regulation by forming binding sites for interacting proteins and/or targeting it to different compartments.

It is found in the nucleus. It catalyses the reaction L-seryl-[protein] + ATP = O-phospho-L-seryl-[protein] + ADP + H(+). The enzyme catalyses L-threonyl-[protein] + ATP = O-phospho-L-threonyl-[protein] + ADP + H(+). With respect to regulation, constitutively active protein kinase whose activity is not directly affected by phosphorylation. Seems to be regulated by level of expression and localization. In terms of biological role, catalytic subunit of a constitutively active serine/threonine-protein kinase complex that phosphorylates a large number of substrates containing acidic residues C-terminal to the phosphorylated serine or threonine. Regulates numerous cellular processes, such as cell cycle progression, apoptosis and transcription, as well as viral infection. May act as a regulatory node which integrates and coordinates numerous signals leading to an appropriate cellular response. During mitosis, functions as a component of the p53/TP53-dependent spindle assembly checkpoint (SAC) that maintains cyclin-B-CDK1 activity and G2 arrest in response to spindle damage. Also required for p53/TP53-mediated apoptosis, phosphorylating 'Ser-392' of p53/TP53 following UV irradiation. Phosphorylates a number of DNA repair proteins in response to DNA damage, such as MDC1, MRE11, RAD9A, RAD51 and HTATSF1, promoting their recruitment to DNA damage sites. Can also negatively regulate apoptosis. Phosphorylates the caspases CASP9 and CASP2 and the apoptotic regulator NOL3. Phosphorylation protects CASP9 from cleavage and activation by CASP8, and inhibits the dimerization of CASP2 and activation of CASP8. Phosphorylates YY1, protecting YY1 from cleavage by CASP7 during apoptosis. Regulates transcription by direct phosphorylation of RNA polymerases I, II, III and IV. Also phosphorylates and regulates numerous transcription factors including NF-kappa-B, STAT1, CREB1, IRF1, IRF2, ATF1, ATF4, SRF, MAX, JUN, FOS, MYC and MYB. Phosphorylates Hsp90 and its co-chaperones FKBP4 and CDC37, which is essential for chaperone function. Mediates sequential phosphorylation of FNIP1, promoting its gradual interaction with Hsp90, leading to activate both kinase and non-kinase client proteins of Hsp90. Regulates Wnt signaling by phosphorylating CTNNB1 and the transcription factor LEF1. Acts as an ectokinase that phosphorylates several extracellular proteins. Phosphorylates PML at 'Ser-565' and primes it for ubiquitin-mediated degradation. Plays an important role in the circadian clock function by phosphorylating BMAL1 at 'Ser-90' which is pivotal for its interaction with CLOCK and which controls CLOCK nuclear entry. Phosphorylates FMR1, promoting FMR1-dependent formation of a membraneless compartment. May phosphorylate histone H2A on 'Ser-1'. This Mus musculus (Mouse) protein is Casein kinase II subunit alpha (Csnk2a1).